The primary structure comprises 182 residues: Large ribosomal subunit protein uL6 (182 aa).

This sequence belongs to the universal ribosomal protein uL6 family. Part of the 50S ribosomal subunit.

Functionally, this protein binds to the 23S rRNA, and is important in its secondary structure. It is located near the subunit interface in the base of the L7/L12 stalk, and near the tRNA binding site of the peptidyltransferase center. The polypeptide is Large ribosomal subunit protein uL6 (Trichormus variabilis (strain ATCC 29413 / PCC 7937) (Anabaena variabilis)).